A 473-amino-acid chain; its full sequence is NADH-quinone oxidoreductase subunit N (473 aa).

The next 14 membrane-spanning stretches (helical) occupy residues 3–23 (LHYLPAIIISIAILVLLLVIA), 30–50 (LAFYITGTGLCIACVSQCSLL), 62–82 (FSSMSGVLSVLLLGILIFLWL), 99–119 (FYLLLLLASLGALGMIVSEHF), 120–140 (ASFFLTLELMSLSFVGLIAYS), 153–173 (YLILSAVASAFMLMGIAIVYL), 195–215 (MLFTAGLIFILIGLLFKLSLV), 230–252 (LPTTALLSTVSKLASFVVLWKLF), 262–282 (IVLTLIGVVAVASMLIGNLLA), 291–311 (ILAFSSISHFGYLLILLFLFN), 326–346 (ALLFYLSAYLITLTGAFSILM), 368–388 (AASLSIVMLSLAGIPLTLGFM), 408–428 (FLVIASVIGLFFYLRVIMVML), and 444–464 (VASLWFIILLIMGLGTFPALF).

The protein belongs to the complex I subunit 2 family. In terms of assembly, NDH-1 is composed of 13 different subunits. Subunits NuoA, H, J, K, L, M, N constitute the membrane sector of the complex.

It localises to the cell inner membrane. It catalyses the reaction a quinone + NADH + 5 H(+)(in) = a quinol + NAD(+) + 4 H(+)(out). In terms of biological role, NDH-1 shuttles electrons from NADH, via FMN and iron-sulfur (Fe-S) centers, to quinones in the respiratory chain. The immediate electron acceptor for the enzyme in this species is believed to be ubiquinone. Couples the redox reaction to proton translocation (for every two electrons transferred, four hydrogen ions are translocated across the cytoplasmic membrane), and thus conserves the redox energy in a proton gradient. This chain is NADH-quinone oxidoreductase subunit N, found in Shewanella woodyi (strain ATCC 51908 / MS32).